A 388-amino-acid polypeptide reads, in one-letter code: Putative pyridoxal phosphate-dependent aminotransferase EpsN (388 aa).

The residue at position 190 (lysine 190) is an N6-(pyridoxal phosphate)lysine.

The protein belongs to the DegT/DnrJ/EryC1 family. It depends on pyridoxal 5'-phosphate as a cofactor.

In terms of biological role, may be involved in the production of the exopolysaccharide (EPS) component of the extracellular matrix during biofilm formation. EPS is responsible for the adhesion of chains of cells into bundles. In Bacillus subtilis (strain 168), this protein is Putative pyridoxal phosphate-dependent aminotransferase EpsN (epsN).